The primary structure comprises 338 residues: Ketol-acid reductoisomerase (NADP(+)) (338 aa).

Residues 1 to 181 (MKIYYDKDCN…GGGKAGIIET (181 aa)) enclose the KARI N-terminal Rossmann domain. Residues 24–27 (YGSQ), Lys47, Ser50, Ser52, and 82–85 (DEIQ) each bind NADP(+). His107 is a catalytic residue. NADP(+) is bound at residue Gly133. Positions 182–327 (SFKEETETDL…ARLRSMMAWI (146 aa)) constitute a KARI C-terminal knotted domain. Mg(2+)-binding residues include Asp190, Glu194, Glu226, and Glu230. Residue Ser251 participates in substrate binding.

This sequence belongs to the ketol-acid reductoisomerase family. The cofactor is Mg(2+).

The catalysed reaction is (2R)-2,3-dihydroxy-3-methylbutanoate + NADP(+) = (2S)-2-acetolactate + NADPH + H(+). The enzyme catalyses (2R,3R)-2,3-dihydroxy-3-methylpentanoate + NADP(+) = (S)-2-ethyl-2-hydroxy-3-oxobutanoate + NADPH + H(+). Its pathway is amino-acid biosynthesis; L-isoleucine biosynthesis; L-isoleucine from 2-oxobutanoate: step 2/4. It functions in the pathway amino-acid biosynthesis; L-valine biosynthesis; L-valine from pyruvate: step 2/4. In terms of biological role, involved in the biosynthesis of branched-chain amino acids (BCAA). Catalyzes an alkyl-migration followed by a ketol-acid reduction of (S)-2-acetolactate (S2AL) to yield (R)-2,3-dihydroxy-isovalerate. In the isomerase reaction, S2AL is rearranged via a Mg-dependent methyl migration to produce 3-hydroxy-3-methyl-2-ketobutyrate (HMKB). In the reductase reaction, this 2-ketoacid undergoes a metal-dependent reduction by NADPH to yield (R)-2,3-dihydroxy-isovalerate. The sequence is that of Ketol-acid reductoisomerase (NADP(+)) from Geotalea uraniireducens (strain Rf4) (Geobacter uraniireducens).